Here is a 182-residue protein sequence, read N- to C-terminus: tRNA-splicing endonuclease (182 aa).

Catalysis depends on residues Tyr-119, His-127, and Lys-158.

The protein belongs to the tRNA-intron endonuclease family. Archaeal short subfamily. As to quaternary structure, homotetramer; although the tetramer contains four active sites, only two participate in the cleavage. Therefore, it should be considered as a dimer of dimers.

The enzyme catalyses pretRNA = a 3'-half-tRNA molecule with a 5'-OH end + a 5'-half-tRNA molecule with a 2',3'-cyclic phosphate end + an intron with a 2',3'-cyclic phosphate and a 5'-hydroxyl terminus.. Its function is as follows. Endonuclease that removes tRNA introns. Cleaves pre-tRNA at the 5'- and 3'-splice sites to release the intron. The products are an intron and two tRNA half-molecules bearing 2',3' cyclic phosphate and 5'-OH termini. Recognizes a pseudosymmetric substrate in which 2 bulged loops of 3 bases are separated by a stem of 4 bp. The sequence is that of tRNA-splicing endonuclease from Saccharolobus islandicus (strain M.16.27) (Sulfolobus islandicus).